The following is a 370-amino-acid chain: uncharacterized protein (370 aa).

The N-terminal stretch at 1–27 is a signal peptide; the sequence is MSSAANEGCVYLFIVVLRLSSFSCVNS. N59, N98, and N126 each carry an N-linked (GlcNAc...) asparagine glycan. Disordered stretches follow at residues 81-101 and 123-167; these read SRSH…NTTA and LSEN…CHQP. Residues 139–148 are compositionally biased toward acidic residues; sequence HDDDDDDDLE. Residues N171, N221, N230, and N262 are each glycosylated (N-linked (GlcNAc...) asparagine).

This is an uncharacterized protein from Saccharomyces cerevisiae (strain ATCC 204508 / S288c) (Baker's yeast).